The following is a 3011-amino-acid chain: Chromodomain-helicase-DNA-binding protein 7 (3011 aa).

Disordered stretches follow at residues 90–146 (ISNA…SMWG), 159–189 (PYQQ…QHMQ), 202–422 (MQQH…GSAG), 502–806 (QQLP…VEKI), and 941–960 (PEME…SESS). A compositionally biased stretch (low complexity) spans 159–168 (PYQQQQQQPQ). Pro residues predominate over residues 169–179 (PTQPPQAPSGP). The span at 203–215 (QQHGQPQQQRMNQ) shows a compositional bias: low complexity. Polar residues-rich tracts occupy residues 216–227 (FSQGQEGLNQGN), 241–258 (VPQQ…SVQQ), 291–347 (QTLN…NQSV), and 374–393 (GSLN…QGTY). A compositionally biased stretch (low complexity) spans 502 to 516 (QQLPSQQQSFQQQMP). 2 stretches are compositionally biased toward polar residues: residues 576 to 586 (TQVSGPNTQLV) and 630 to 641 (DSQNLSRNSVDC). Composition is skewed to basic and acidic residues over residues 655 to 684 (KKEP…EPKE) and 718 to 730 (KGKE…DLDK). The segment covering 747-759 (QKRRSSRQVKRKR) has biased composition (basic residues). The segment covering 760–770 (YTEDLEFKISD) has biased composition (basic and acidic residues). Over residues 783-795 (SPSNTSQSEQQES) the composition is skewed to polar residues. Chromo domains lie at 801–868 (PVVE…GQNK) and 883–948 (VEID…RVER). A Helicase ATP-binding domain is found at 981–1155 (LFNWYNTRNC…FSLLHFLEPG (175 aa)). Residue 994-1001 (DEMGLGKT) participates in ATP binding. The short motif at 1106–1109 (DEAH) is the DEAH box element. In terms of domain architecture, Helicase C-terminal spans 1295 to 1465 (LIDKLLPKLK…LSKKEIEDLL (171 aa)). Disordered stretches follow at residues 1577 to 1602 (FSDL…SQGY), 1836 to 1869 (GTDM…KDEI), and 2136 to 2291 (GTGN…GFYM). Positions 1585–1597 (EEKPSTKPRRPQD) are enriched in basic and acidic residues. Residues 1845-1856 (DGGEFDREDEDP) show a composition bias toward acidic residues. Over residues 1857 to 1867 (EYKPTRTPFKD) the composition is skewed to basic and acidic residues. The segment covering 2136–2145 (GTGNANTVSS) has biased composition (polar residues). Basic and acidic residues-rich tracts occupy residues 2166-2207 (QEEK…KQDC) and 2218-2238 (CELK…SEKG). The segment covering 2239–2253 (SEEDEEEKLDDDDKS) has biased composition (acidic residues). Residues 2403–2433 (RRRRRKIEIEAERAAKRRNLMEMVAQLRESQ) adopt a coiled-coil conformation. Ser-2561 carries the phosphoserine modification. 2 disordered regions span residues 2825–2900 (TTGN…LPTN) and 2946–3011 (GSNE…ENDE). Positions 2841–2851 (GASKAEEKKNE) are enriched in basic and acidic residues. Over residues 2864–2877 (DTVSATDSANGSVS) the composition is skewed to polar residues. Residues 2878–2893 (AATAATTATATTTTTT) are compositionally biased toward low complexity. Positions 2948–2964 (NEEKATDKTEGTAFKDE) are enriched in basic and acidic residues. Acidic residues-rich tracts occupy residues 2965–2974 (ENLEGSDAEE) and 2984–3011 (ILED…ENDE).

It belongs to the SNF2/RAD54 helicase family. Expressed in the neural epithelium, otic placodes, optic placodes, branchial arches, and the olfactory placodes,.

The protein resides in the nucleus. It carries out the reaction ATP + H2O = ADP + phosphate + H(+). In terms of biological role, ATP-dependent chromatin-remodeling factor, slides nucleosomes along DNA; nucleosome sliding requires ATP.Probable transcription regulator. Maybe involved in the in 45S precursor rRNA production. This Gallus gallus (Chicken) protein is Chromodomain-helicase-DNA-binding protein 7 (CHD7).